The sequence spans 584 residues: (+)-larreatricin hydroxylase, chloroplastic (584 aa).

The N-terminal 32 residues, 1–32 (MASLSSQSKLLATPYSFPYHTKPSRVSLRRVS), are a transit peptide targeting the chloroplast. The N-terminal 47 residues, 33-79 (CKASNDNKDKPNDQEKTFSIDRRNMLIGLGGLYGASNVFPSNQSTLA), are a transit peptide targeting the thylakoid. 2 disulfides stabilise this stretch: Cys-91/Cys-106 and Cys-105/Cys-168. Residues His-167, His-188, His-197, His-319, His-323, and His-353 each coordinate Cu cation. Positions 171–188 (CNGAYDQVGFPDVNIQVH) form a cross-link, 2'-(S-cysteinyl)-histidine (Cys-His). Positions 432–584 (RLRSKATTTT…KIEFVRDEED (153 aa)) are cleaved as a propeptide — removed in mature form.

The protein belongs to the tyrosinase family. Cu(2+) is required as a cofactor.

The protein resides in the plastid. It localises to the chloroplast thylakoid lumen. The catalysed reaction is (+)-larreatricin + AH2 + O2 = (+)-3'-hydroxylarreatricin + A + H2O. Its function is as follows. Enantio-specific polyphenol oxidase involved in aromatic ring hydroxylation. Involved in the biosynthesis of the creosote bush 8-8' linked lignans. Has a strong preference for the 3' position of (+)-larreatricin. This Larrea tridentata (Creosote bush) protein is (+)-larreatricin hydroxylase, chloroplastic.